The sequence spans 132 residues: Small ribosomal subunit protein uS8 (132 aa).

It belongs to the universal ribosomal protein uS8 family. In terms of assembly, part of the 30S ribosomal subunit. Contacts proteins S5 and S12.

Functionally, one of the primary rRNA binding proteins, it binds directly to 16S rRNA central domain where it helps coordinate assembly of the platform of the 30S subunit. The protein is Small ribosomal subunit protein uS8 of Enterococcus faecalis (strain ATCC 700802 / V583).